A 278-amino-acid chain; its full sequence is Secoisolariciresinol dehydrogenase (278 aa).

NAD(+) is bound by residues 23–28 (GGAGGI), D47, V73, and N99. Substrate-binding residues include S104 and S164. Y167 (proton donor/acceptor) is an active-site residue. The NAD(+) site is built by K171 and V200.

The protein belongs to the short-chain dehydrogenases/reductases (SDR) family. Homotetramer.

The enzyme catalyses (-)-secoisolariciresinol + 2 NAD(+) = (-)-matairesinol + 2 NADH + 2 H(+). In terms of biological role, oxidoreductase involved in lignan biosynthesis. Catalyzes the stereospecific conversion of (-)-secoisolariciresinol to (-)-matairesinol via a lactol intermediate. This is Secoisolariciresinol dehydrogenase from Podophyllum peltatum (American mandrake).